A 373-amino-acid polypeptide reads, in one-letter code: Geraniol dehydrogenase (373 aa).

7 residues coordinate Zn(2+): C47, H67, C96, C99, C102, C110, and C175.

This sequence belongs to the zinc-containing alcohol dehydrogenase family. Homodimer. Zn(2+) serves as cofactor.

It carries out the reaction (2E)-geraniol + NAD(+) = (2E)-geranial + NADH + H(+). The catalysed reaction is perillyl alcohol + NAD(+) = perillyl aldehyde + NADH + H(+). The protein operates within terpene metabolism; monoterpene degradation. With respect to regulation, is inhibited by EDTA, N-ethylmaleimide, diethylpyrocarbonate, and 1-cyclohexyl-N-(2-morpholinoethyl)carbodiimide in vitro. Its function is as follows. Involved in the degradation of the monoterpenes beta-myrcene and limonene. During anaerobic degradation of beta-myrcene, catalyzes the NAD(+)-dependent oxidation of geraniol to geranial. Can also catalyze the oxidation of (S)-perillyl alcohol to perillyl aldehyde, and to a lesser extent, the oxidation of nerol, citronellol, cumic alcohol, and benzyl alcohol. Cannot use NADP(+) instead of NAD(+) as cosubstrate. The protein is Geraniol dehydrogenase of Castellaniella defragrans (strain DSM 12143 / CCUG 39792 / 65Phen) (Alcaligenes defragrans).